The sequence spans 331 residues: Malate dehydrogenase (331 aa).

Position 14-20 (Gly-14–Gly-20) interacts with NAD(+). Substrate-binding residues include Arg-95 and Arg-101. Residues Asn-108, Gln-115, and Val-132–Asn-134 contribute to the NAD(+) site. Substrate-binding residues include Asn-134 and Arg-165. The active-site Proton acceptor is the His-190.

This sequence belongs to the LDH/MDH superfamily. MDH type 2 family.

It catalyses the reaction (S)-malate + NAD(+) = oxaloacetate + NADH + H(+). Functionally, catalyzes the reversible oxidation of malate to oxaloacetate. The chain is Malate dehydrogenase from Rhodococcus jostii (strain RHA1).